We begin with the raw amino-acid sequence, 97 residues long: Aspartyl/glutamyl-tRNA(Asn/Gln) amidotransferase subunit C (97 aa).

It belongs to the GatC family. As to quaternary structure, heterotrimer of A, B and C subunits.

It catalyses the reaction L-glutamyl-tRNA(Gln) + L-glutamine + ATP + H2O = L-glutaminyl-tRNA(Gln) + L-glutamate + ADP + phosphate + H(+). The catalysed reaction is L-aspartyl-tRNA(Asn) + L-glutamine + ATP + H2O = L-asparaginyl-tRNA(Asn) + L-glutamate + ADP + phosphate + 2 H(+). Its function is as follows. Allows the formation of correctly charged Asn-tRNA(Asn) or Gln-tRNA(Gln) through the transamidation of misacylated Asp-tRNA(Asn) or Glu-tRNA(Gln) in organisms which lack either or both of asparaginyl-tRNA or glutaminyl-tRNA synthetases. The reaction takes place in the presence of glutamine and ATP through an activated phospho-Asp-tRNA(Asn) or phospho-Glu-tRNA(Gln). This is Aspartyl/glutamyl-tRNA(Asn/Gln) amidotransferase subunit C from Prochlorococcus marinus subsp. pastoris (strain CCMP1986 / NIES-2087 / MED4).